The following is a 643-amino-acid chain: 1-deoxy-D-xylulose-5-phosphate synthase (643 aa).

Thiamine diphosphate is bound by residues His-78 and Ala-119–Ser-121. Asp-150 lines the Mg(2+) pocket. Thiamine diphosphate is bound by residues Gly-151–Ser-152, Asn-179, Tyr-288, and Glu-370. Asn-179 provides a ligand contact to Mg(2+).

This sequence belongs to the transketolase family. DXPS subfamily. As to quaternary structure, homodimer. Mg(2+) is required as a cofactor. The cofactor is thiamine diphosphate.

The enzyme catalyses D-glyceraldehyde 3-phosphate + pyruvate + H(+) = 1-deoxy-D-xylulose 5-phosphate + CO2. It participates in metabolic intermediate biosynthesis; 1-deoxy-D-xylulose 5-phosphate biosynthesis; 1-deoxy-D-xylulose 5-phosphate from D-glyceraldehyde 3-phosphate and pyruvate: step 1/1. Functionally, catalyzes the acyloin condensation reaction between C atoms 2 and 3 of pyruvate and glyceraldehyde 3-phosphate to yield 1-deoxy-D-xylulose-5-phosphate (DXP). The chain is 1-deoxy-D-xylulose-5-phosphate synthase from Brucella abortus (strain 2308).